We begin with the raw amino-acid sequence, 53 residues long: UPF0391 membrane protein KPK_4780 (53 aa).

The next 2 membrane-spanning stretches (helical) occupy residues 4–24 and 30–47; these read WGII…GGLA and AAKI…VSLF.

The protein belongs to the UPF0391 family.

The protein localises to the cell membrane. In Klebsiella pneumoniae (strain 342), this protein is UPF0391 membrane protein KPK_4780.